The primary structure comprises 496 residues: Transcription factor CP2 (496 aa).

Positions 61–300 (ENKILPFQYV…SPGFNSSHSS (240 aa)) constitute a Grh/CP2 DB domain. The tract at residues 133–386 (EHQQLEGWRW…LFNALKGRMV (254 aa)) is DNA-binding. Disordered regions lie at residues 238–268 (FKPKGADRKQKTDREKMEKRTPHEKEKYQPS) and 296–327 (SSHSSFSIGEGNGSPNHQPEPPPPIADNLLPT). A compositionally biased stretch (basic and acidic residues) spans 241 to 265 (KGADRKQKTDREKMEKRTPHEKEKY).

This sequence belongs to the grh/CP2 family. CP2 subfamily. In terms of assembly, component of the SSP (stage selector protein) complex, which appears to be a heteromer of TFCP2 and 2 copies of NFE4. As to expression, expressed in the epiblast at the pre-primitive streak stage. At the primitive streak stage, expressed in the extending primitive streak and in the prospective neural plate. At stages 7 and 8, expressed in the neural folds, somites and in the regressing primitive streak. At stage 12, ubiquitously expressed in the whole embryo.

It localises to the nucleus. In terms of biological role, binds the B-response element 5'-CAAGTCCAGGCAAGT-3' of the ENS1/ERNI promoter. May be the major transcription activator thus being essential for its expression. The sequence is that of Transcription factor CP2 (TFCP2) from Gallus gallus (Chicken).